Reading from the N-terminus, the 793-residue chain is MVVAKIEKTGTLSTEQLQKMHAYWRAANYLSVGQIYLMDNPLLREPLKLEHVKPRLLGHWGTTPGLNFIYVHLNRVIQDEDLDMIYIAGPGHGGPGLVANTYLEGTYSEYYPNISEDAEGMKRLFKQFSFPGGIPSHVAPETPGSIHEGGELGYAVSHAYGAVFDNPDLIVACVVGDGEAETGPLATSWHSNKFLNPVRDGAVLPILHLNGYKIANPTVLARISHEELEKLFEGYGYKPYFVEGSEYEPTHQLMAATLDTCIAEIKAIQHEARTGGATARPRWPMIVLRTPKGWTGPKEVDGKKTEDFWRSHQVPFSEMAGKPEHVQLLETWMRSYQPEELFDENGTFLGELKALAPKGHRRMGDNPHANGGILLKDLKMPDFRSYAVDVAKPGTTFAEATKVMGIFLRDVMKANLDQRNFRIVGPDETASNRWGPLFEITNRTWMDAIHPYDDHLSQDGRVMEILSEHTCQGWLEGYLLTGRHGFFSCYEAFIHLVDSMFNQHAKWLKTTRHIPWRRPIASLNYLLTSHVWRQDHNGFSHQDPGFIDHVVNKRAEVIRVYLPPDANTLLSVTDHCLRSRHYVNVVVAGKQPALQYLDMDAAIKHCTKGIGIWDWASNDQGVEPDVVMACCGDIPTLETLAAVDILRQNFPDLKIRVINVVNLMKLQPESEHPHGLSDKDFDSIFTPDKPVVFAFHGYPWLIHRLTYRRNNHNNIHVRGYKEEGTTTTPFDMVVMNDLDRFNLADDVIDRVPRLRYTAAHVKQMLHDKLIEHKQYIHEHGDDMPEIRDWCWPY.

This sequence belongs to the XFP family. Thiamine diphosphate is required as a cofactor.

The protein is Probable phosphoketolase of Gloeobacter violaceus (strain ATCC 29082 / PCC 7421).